The following is a 293-amino-acid chain: MKKILAFLLIAAGSTLFFVFLFIFLSKVFSGEILLSRYIFRIGGFELRWYSTLILMGFLISYFVARKRAKNEGINLEEFDELIFYGVIAGIVGARLYYVLFNLKYYRSLWDALKIWEGGLAIHGAVIGALLTGFLYVRLKKPSFTFLQATDLFTSVLPLGQAIGRWGNFFNYEAFGVPTNLPWKMFVPEPYRPVVYKDYSFFHPTFLYESIWDLLVFFMLSVYFKRYRKRHGEVTCLYFVLYSLGRIVIERLRVDSLMIGNIKAAQLLSAVLILLGFTGFLILRSSQEPKRAF.

Transmembrane regions (helical) follow at residues 45-65 (FELRWYSTLILMGFLISYFVA), 81-101 (ELIFYGVIAGIVGARLYYVLF), 115-135 (IWEGGLAIHGAVIGALLTGFL), and 144-164 (FTFLQATDLFTSVLPLGQAIG). Residue Arg-165 coordinates a 1,2-diacyl-sn-glycero-3-phospho-(1'-sn-glycerol). Helical transmembrane passes span 204 to 224 (PTFLYESIWDLLVFFMLSVYF), 231 to 249 (HGEVTCLYFVLYSLGRIVI), and 262 to 282 (IKAAQLLSAVLILLGFTGFLI).

Belongs to the Lgt family.

It localises to the cell inner membrane. It carries out the reaction L-cysteinyl-[prolipoprotein] + a 1,2-diacyl-sn-glycero-3-phospho-(1'-sn-glycerol) = an S-1,2-diacyl-sn-glyceryl-L-cysteinyl-[prolipoprotein] + sn-glycerol 1-phosphate + H(+). It functions in the pathway protein modification; lipoprotein biosynthesis (diacylglyceryl transfer). Its function is as follows. Catalyzes the transfer of the diacylglyceryl group from phosphatidylglycerol to the sulfhydryl group of the N-terminal cysteine of a prolipoprotein, the first step in the formation of mature lipoproteins. The sequence is that of Phosphatidylglycerol--prolipoprotein diacylglyceryl transferase from Thermotoga maritima (strain ATCC 43589 / DSM 3109 / JCM 10099 / NBRC 100826 / MSB8).